A 266-amino-acid chain; its full sequence is Probable septum site-determining protein MinC (266 aa).

The span at 1–21 shows a compositional bias: low complexity; it reads MSEAESTPVEEPVVESTEGSE. Positions 1 to 28 are disordered; that stretch reads MSEAESTPVEEPVVESTEGSEAIPEVEQ.

Belongs to the MinC family. In terms of assembly, interacts with MinD and FtsZ.

Cell division inhibitor that blocks the formation of polar Z ring septums. Rapidly oscillates between the poles of the cell to destabilize FtsZ filaments that have formed before they mature into polar Z rings. Prevents FtsZ polymerization. In Thermosynechococcus vestitus (strain NIES-2133 / IAM M-273 / BP-1), this protein is Probable septum site-determining protein MinC.